Reading from the N-terminus, the 949-residue chain is Coiled-coil domain-containing protein 80 (949 aa).

An N-terminal signal peptide occupies residues Met-1 to Ala-22. Disordered stretches follow at residues His-24–Ser-79, Ser-112–Phe-132, and His-289–Ser-610. A compositionally biased stretch (basic and acidic residues) spans Ser-112–Ser-123. Over residues Asn-295–Gly-307 the composition is skewed to gly residues. Over residues Gly-308–Arg-328 the composition is skewed to basic and acidic residues. Positions Arg-345–Thr-380 are enriched in low complexity. Residues Pro-419 to Gln-429 show a composition bias toward basic and acidic residues. A compositionally biased stretch (polar residues) spans Lys-436 to Ala-445. A compositionally biased stretch (basic and acidic residues) spans Arg-463–Gln-477. Residue Asn-467 is glycosylated (N-linked (GlcNAc...) asparagine). The span at Lys-487–Asp-498 shows a compositional bias: basic residues. 3 stretches are compositionally biased toward basic and acidic residues: residues Arg-499–Asp-510, Lys-534–Glu-548, and Ala-556–Lys-581. Glycyl lysine isopeptide (Lys-Gly) (interchain with G-Cter in SUMO2) cross-links involve residues Lys-544 and Lys-547. Residues Lys-554 to Ala-587 adopt a coiled-coil conformation.

It belongs to the CCDC80 family. In terms of assembly, binds to various extracellular matrix proteins. Post-translationally, phosphorylated. As to expression, expressed in brain, stomach, colon, rectum, liver, lung, kidney, adipocytes and testis.

It localises to the secreted. The protein resides in the extracellular space. Its subcellular location is the extracellular matrix. Functionally, promotes cell adhesion and matrix assembly. The chain is Coiled-coil domain-containing protein 80 (Ccdc80) from Mus musculus (Mouse).